The sequence spans 284 residues: Methylglyoxal reductase YeaE (284 aa).

The protein belongs to the aldo/keto reductase family.

The catalysed reaction is hydroxyacetone + NADP(+) = methylglyoxal + NADPH + H(+). The enzyme catalyses a primary alcohol + NADP(+) = an aldehyde + NADPH + H(+). Its function is as follows. Aldo-keto reductase that contributes to cellular methylglyoxal detoxification by catalyzing the NADPH-dependent conversion of methylglyoxal to acetol. It also exhibits activity with glyoxal and probably plays a significant role in detoxification of glyoxal in vivo. Can also use aromatic aldehydes such as 4-nitrobenzaldehyde, 3-nitrobenzaldehyde and benzaldehyde, and phenylglyoxal. The sequence is that of Methylglyoxal reductase YeaE (yeaE) from Escherichia coli (strain K12).